The sequence spans 953 residues: Trafficking kinesin-binding protein 1 (953 aa).

The HAP1 N-terminal domain maps to 47–354; it reads LEEQLPHYKL…EELKNLRNKT (308 aa). A coiled-coil region spans residues 104-356; sequence QMTKTYNDID…LKNLRNKTMP (253 aa). The interval 359–509 is interaction with HGS; sequence TSRRYHSLGL…RRLSLRRENY (151 aa). The O-linked (GlcNAc) serine glycan is linked to serine 447. Positions 472 to 495 are disordered; it reads AADLGNDERSKKPGTPGTPGSHDL. Positions 492 to 532 form a coiled coil; sequence SHDLETALRRLSLRRENYLSERRFFEEEQERKLQELAEKGE. Serine 537 is modified (phosphoserine). The tract at residues 658–672 is interaction with OGT; sequence PGKCMSQTNSTFTFT. Residues serine 680 and serine 719 are each glycosylated (O-linked (GlcNAc) serine). Phosphoserine is present on serine 719. The tract at residues 777–796 is disordered; the sequence is VIPSTPPNSPMQTPTSSPPS. Residues 786–796 are compositionally biased toward low complexity; sequence PMQTPTSSPPS. Serine 919 bears the Phosphoserine mark. O-linked (GlcNAc) threonine glycosylation occurs at threonine 935.

This sequence belongs to the milton family. As to quaternary structure, interacts with RHOT1 and RHOT2. Found in a complex with KIF5B, OGT, RHOT1 and RHOT2. Interacts with HGS. Interacts with GABRA1. Interacts with KIF5C. Interacts with OGT; stable interaction is not required for glycosylation of this protein by OGT. Isoform 1 interacts with OGT. Post-translationally, O-glycosylated. Glycosylated by OGT; glycosylation in response to increased extracellular glucose levels is required for and leads to regulation of mitochondrial motility by OGT. High expression in spinal cord and moderate expression in all other tissues and specific brain regions examined. Expressed in all cell lines examined.

It is found in the cytoplasm. The protein resides in the nucleus. It localises to the mitochondrion. The protein localises to the early endosome. Its subcellular location is the endosome. It is found in the mitochondrion membrane. The protein resides in the cell cortex. Involved in the regulation of endosome-to-lysosome trafficking, including endocytic trafficking of EGF-EGFR complexes and GABA-A receptors. Involved in mitochondrial motility. When O-glycosylated, abolishes mitochondrial motility. Crucial for recruiting OGT to the mitochondrial surface of neuronal processes. TRAK1 and RHOT form an essential protein complex that links KIF5 to mitochondria for light chain-independent, anterograde transport of mitochondria. The protein is Trafficking kinesin-binding protein 1 (TRAK1) of Homo sapiens (Human).